The following is a 150-amino-acid chain: uncharacterized protein (150 aa).

One can recognise an N-acetyltransferase domain in the interval 4–149 (IQIRNYQPGD…TNFYMRYKPQ (146 aa)).

This sequence belongs to the acetyltransferase family.

This is an uncharacterized protein from Escherichia coli (strain K12).